A 204-amino-acid polypeptide reads, in one-letter code: Inner membrane protein YagU (204 aa).

At 1-14 (MNIFEQTPPNRRRY) the chain is on the periplasmic side. Residues 15-35 (GLAAFIGLIAGVVSAFVKWGA) traverse the membrane as a helical segment. At 36–100 (EVPLPPRSPV…VYTFAGHVFN (65 aa)) the chain is on the cytoplasmic side. Residues 101 to 121 (WVGVTHIIFSIVFAVGYCVVA) traverse the membrane as a helical segment. Over 122-132 (EVFPKIKLWQG) the chain is Periplasmic. The chain crosses the membrane as a helical span at residues 133-153 (LLAGALAQLFVHMISFPLMGL). The Cytoplasmic portion of the chain corresponds to 154–204 (TPPLFDLPWYENVSEIFGHLVWFWSIEIIRRDLRNRITHEPDPEIPLGSNR).

Homodimer.

The protein localises to the cell inner membrane. This Escherichia coli (strain K12) protein is Inner membrane protein YagU (yagU).